Here is a 247-residue protein sequence, read N- to C-terminus: Probable transcriptional regulatory protein lpp1249 (247 aa).

This sequence belongs to the TACO1 family.

The protein resides in the cytoplasm. The polypeptide is Probable transcriptional regulatory protein lpp1249 (Legionella pneumophila (strain Paris)).